The chain runs to 768 residues: Cullin-3 (768 aa).

Residues 677-698 are disordered; the sequence is VAAKQGESDPERKETRQKVDDD. Residues 682–698 show a composition bias toward basic and acidic residues; sequence GESDPERKETRQKVDDD. A Cullin neddylation domain is found at 698-760; sequence DRKHEIEAAI…REYLARTPED (63 aa). A Glycyl lysine isopeptide (Lys-Gly) (interchain with G-Cter in NEDD8) cross-link involves residue lysine 712.

The protein belongs to the cullin family. In terms of assembly, component of multiple BCR (BTB-CUL3-RBX1) E3 ubiquitin-protein ligase complexes formed of cul3, rbx1 and a variable BTB domain-containing protein acting as both, adapter to cullin and substrate recognition subunit. Interacts with btbd6. Neddylated. Attachment of NEDD8 is required for the E3 ubiquitin-protein ligase activity of the SCF-like complex.

It is found in the nucleus. It participates in protein modification; protein ubiquitination. Its function is as follows. Probable core component of cullin-based SCF-like E3 ubiquitin-protein ligase complexes which mediate the ubiquitination and subsequent proteasomal degradation of target proteins. The E3 ubiquitin-protein ligase activity of the complex is dependent on the neddylation of the cullin subunit. Involved in ER-Golgi transport by regulating the size of COPII coats, thereby playing a key role in collagen export, which is required for embryonic stem (ES) cells division. May play a role in the regulation of mittotic entry via ubiquitination of aurka. The chain is Cullin-3 (cul3) from Xenopus tropicalis (Western clawed frog).